Consider the following 1163-residue polypeptide: NACHT, LRR and PYD domains-containing protein 5 (1163 aa).

Basic and acidic residues-rich tracts occupy residues 1-42 (MGPP…KDQG), 56-94 (PEKESKAILKARGLEEEQKSERKMTSPENDSKSIQKDQG), and 108-127 (PEKDSKAILKARGLEEEQKS). The interval 1–201 (MGPPEKESKA…TEADKDNGGD (201 aa)) is disordered. Residues 128 to 137 (ESTMSPSENV) show a composition bias toward polar residues. Positions 153–173 (ASERKMTSPENDSKSIQKDQG) are enriched in basic and acidic residues. The NACHT domain maps to 243–565 (HTIILHGRPG…AALYYVLEGL (323 aa)). Residue 249 to 256 (GRPGVGKS) coordinates ATP. LRR repeat units lie at residues 801–822 (NLKYLNLGNTPMKDDDMKLACE), 830–851 (SVETLRLDSCELTIIGYEMIST), 858–878 (RLKCLSLAKNRVGVKSMISLG), 887–906 (LLQKLILDNCGLTPASCHLL), 915–935 (NLTHLCLSNNSLGTEGVQQLC), 944–964 (ALQRLILNHCNIVDDAYGFLA), 972–993 (KLTHLSLTMNPVGDGAMKLLCE), 1001–1022 (YLQELELVDCQLTQNCCEDLAC), 1029–1050 (HLKSLDLGNNALGDKGVITLCE), 1058–1079 (SLRRLGLGACKLTSNCCEALSL), and 1086–1107 (HLNSLNLVKNDFSTSGMLKLCS).

The protein belongs to the NLRP family. In terms of assembly, component of the subcortical maternal complex (SCMC), at least composed of NLRP5, KHDC3, OOEP, and TLE6. Within the complex, interacts with OOEP, KHDC3 and TLE6. The SCMC may facilitate translocation of its components between the nuclear and cytoplasmic compartments. As part of the SCMC interacts with the SCMC-associated protein ZBED3. As part of the SCMC interacts with the SCMC-associated protein CFL1/Cofilin-1. Interacts with PRKCE. Interacts with TUBB3 at cytoskeleton microtubules. In terms of processing, phosphorylated by PRKCE.

It is found in the cytoplasm. Its subcellular location is the cytoplasmic vesicle. It localises to the secretory vesicle. The protein resides in the cortical granule. The protein localises to the mitochondrion. It is found in the nucleus. Its subcellular location is the nucleolus. It localises to the golgi apparatus. Component of the subcortical maternal complex (SCMC), a multiprotein complex that plays a key role in early embryonic development. The SCMC complex is a structural constituent of cytoplasmic lattices, which consist in fibrous structures found in the cytoplasm of oocytes and preimplantation embryos. They are required to store maternal proteins critical for embryonic development, such as proteins that control epigenetic reprogramming of the preimplantation embryo, and prevent their degradation or activation. Required for the localization of cortical granules to the cortex of oocytes, via association with the cortical actin scaffold. Required for cortical actin clearance prior to oocyte exocytosis and prevention of polyspermy. Involved in regulating post-fertilization Ca(2+) release and endoplasmic reticulum storage (ER) storage via regulation of cellular localization. May be involved in the localization of mitochondria to the cytoplasm and perinuclear region in oocytes and early stage embryos, independent of its role in CPL formation. In Mus musculus (Mouse), this protein is NACHT, LRR and PYD domains-containing protein 5.